A 389-amino-acid polypeptide reads, in one-letter code: Allantoicase (389 aa).

It belongs to the allantoicase family.

It carries out the reaction allantoate + H2O = (S)-ureidoglycolate + urea. The protein operates within nitrogen metabolism; (S)-allantoin degradation; (S)-ureidoglycolate from allantoate (aminidohydrolase route): step 1/1. Its function is as follows. Utilization of purines as secondary nitrogen sources, when primary sources are limiting. The polypeptide is Allantoicase (allc) (Xenopus tropicalis (Western clawed frog)).